The sequence spans 125 residues: Small ribosomal subunit protein eS8 (125 aa).

Belongs to the eukaryotic ribosomal protein eS8 family. Part of the 30S ribosomal subunit.

This is Small ribosomal subunit protein eS8 from Methanosarcina acetivorans (strain ATCC 35395 / DSM 2834 / JCM 12185 / C2A).